The primary structure comprises 346 residues: Phosphate acyltransferase (346 aa).

It belongs to the PlsX family. In terms of assembly, homodimer. Probably interacts with PlsY.

The protein localises to the cytoplasm. It carries out the reaction a fatty acyl-[ACP] + phosphate = an acyl phosphate + holo-[ACP]. Its pathway is lipid metabolism; phospholipid metabolism. Its function is as follows. Catalyzes the reversible formation of acyl-phosphate (acyl-PO(4)) from acyl-[acyl-carrier-protein] (acyl-ACP). This enzyme utilizes acyl-ACP as fatty acyl donor, but not acyl-CoA. The chain is Phosphate acyltransferase from Delftia acidovorans (strain DSM 14801 / SPH-1).